A 475-amino-acid polypeptide reads, in one-letter code: Ribulose bisphosphate carboxylase large chain (475 aa).

Positions M1–S2 are excised as a propeptide. P3 carries the post-translational modification N-acetylproline. The residue at position 14 (K14) is an N6,N6,N6-trimethyllysine. N123 and T173 together coordinate substrate. The active-site Proton acceptor is K175. K177 contacts substrate. Mg(2+)-binding residues include K201, D203, and E204. K201 is subject to N6-carboxylysine. Residue H294 is the Proton acceptor of the active site. Substrate-binding residues include R295, H327, and S379.

Belongs to the RuBisCO large chain family. Type I subfamily. As to quaternary structure, heterohexadecamer of 8 large chains and 8 small chains. Mg(2+) is required as a cofactor.

It is found in the plastid. It localises to the chloroplast. It catalyses the reaction 2 (2R)-3-phosphoglycerate + 2 H(+) = D-ribulose 1,5-bisphosphate + CO2 + H2O. It carries out the reaction D-ribulose 1,5-bisphosphate + O2 = 2-phosphoglycolate + (2R)-3-phosphoglycerate + 2 H(+). RuBisCO catalyzes two reactions: the carboxylation of D-ribulose 1,5-bisphosphate, the primary event in carbon dioxide fixation, as well as the oxidative fragmentation of the pentose substrate in the photorespiration process. Both reactions occur simultaneously and in competition at the same active site. This is Ribulose bisphosphate carboxylase large chain from Huperzia lucidula (Shining clubmoss).